The sequence spans 762 residues: Poly(A) RNA polymerase CID14 (762 aa).

The tract at residues 1–123 is disordered; that stretch reads MPTGFQPAES…KKEEQKAAER (123 aa). The segment covering 50-62 has biased composition (basic residues); it reads KKNKKDKKKKGSK. Composition is skewed to basic and acidic residues over residues 65-75 and 99-123; these read QPVDEPDKKDG and RKRD…AAER. Ser189 contributes to the ATP binding site. Mg(2+) contacts are provided by Asp200 and Asp202. ATP is bound by residues Gly266, Lys291, Ser309, and Tyr310. In terms of domain architecture, PAP-associated spans 336-393; the sequence is NLGTLLIEFFELFGRNFNYNDVGISIRRGGFYFSKASRGWMKGQSFLLSIEDPQDKDN. The segment at 482-762 is disordered; sequence SIPLGADPKP…LGQSSGDMSD (281 aa). Residues 536 to 549 are compositionally biased toward acidic residues; that stretch reads VEDDELESDDDSDS. A compositionally biased stretch (polar residues) spans 572-581; the sequence is RTANSRSTSR. An ATP-binding site is contributed by Lys610. 2 stretches are compositionally biased toward acidic residues: residues 677–687 and 697–707; these read GEEEEEIDSDE and SDGDLGSEDEI. Polar residues predominate over residues 753–762; the sequence is LGQSSGDMSD.

This sequence belongs to the DNA polymerase type-B-like family. As to quaternary structure, component of the TRAMP complex. Mg(2+) serves as cofactor. It depends on Mn(2+) as a cofactor.

It is found in the nucleus. It localises to the nucleolus. The enzyme catalyses RNA(n) + ATP = RNA(n)-3'-adenine ribonucleotide + diphosphate. Required for 3' polyadenylation of the 5.8S and 25S rRNAs as a prelude to their degradation in the exosome. Involved in the nucleolar organization to ensure faithful chromosome segregation during mitosis. This is Poly(A) RNA polymerase CID14 from Cryptococcus neoformans var. neoformans serotype D (strain JEC21 / ATCC MYA-565) (Filobasidiella neoformans).